Here is a 417-residue protein sequence, read N- to C-terminus: UDP-N-acetylglucosamine 1-carboxyvinyltransferase (417 aa).

22-23 (KN) serves as a coordination point for phosphoenolpyruvate. Residue arginine 93 participates in UDP-N-acetyl-alpha-D-glucosamine binding. Cysteine 117 functions as the Proton donor in the catalytic mechanism. At cysteine 117 the chain carries 2-(S-cysteinyl)pyruvic acid O-phosphothioketal. UDP-N-acetyl-alpha-D-glucosamine is bound by residues 122 to 126 (RPVDL), aspartate 305, and isoleucine 327.

The protein belongs to the EPSP synthase family. MurA subfamily.

It localises to the cytoplasm. The enzyme catalyses phosphoenolpyruvate + UDP-N-acetyl-alpha-D-glucosamine = UDP-N-acetyl-3-O-(1-carboxyvinyl)-alpha-D-glucosamine + phosphate. It functions in the pathway cell wall biogenesis; peptidoglycan biosynthesis. Functionally, cell wall formation. Adds enolpyruvyl to UDP-N-acetylglucosamine. This chain is UDP-N-acetylglucosamine 1-carboxyvinyltransferase, found in Thiobacillus denitrificans (strain ATCC 25259 / T1).